The following is a 360-amino-acid chain: Histidinol-phosphate aminotransferase (360 aa).

Lys223 bears the N6-(pyridoxal phosphate)lysine mark.

The protein belongs to the class-II pyridoxal-phosphate-dependent aminotransferase family. Histidinol-phosphate aminotransferase subfamily. Homodimer. The cofactor is pyridoxal 5'-phosphate.

The enzyme catalyses L-histidinol phosphate + 2-oxoglutarate = 3-(imidazol-4-yl)-2-oxopropyl phosphate + L-glutamate. The protein operates within amino-acid biosynthesis; L-histidine biosynthesis; L-histidine from 5-phospho-alpha-D-ribose 1-diphosphate: step 7/9. This chain is Histidinol-phosphate aminotransferase, found in Bacillus velezensis (strain DSM 23117 / BGSC 10A6 / LMG 26770 / FZB42) (Bacillus amyloliquefaciens subsp. plantarum).